Reading from the N-terminus, the 237-residue chain is MTKLSVNINKIATLRNARGGNVPDLLKVAADIQRFGGQGITIHPRPDERHIRYQDARDLKAIVTTEYNIEGNPQHNFIDLVLECKPDQVTLVPDAIGAITSSAGWDTIKNQEYLKEVIQEFQRNGIRTSIFVDPVLEMIEGAKKTGTDRIELYTEAFAHQYDLGNKNGIDPYVKAAELANELGLGINAGHDLSLDNIQFFKQNIPGLLEVSIGHALISEALYLGLDNVVNMYLKKLK.

2 residues coordinate 3-amino-2-oxopropyl phosphate: Asn7 and Arg18. Residue His43 is the Proton acceptor of the active site. 1-deoxy-D-xylulose 5-phosphate contacts are provided by Arg45 and His50. The Proton acceptor role is filled by Glu70. Position 100 (Thr100) interacts with 1-deoxy-D-xylulose 5-phosphate. His190 acts as the Proton donor in catalysis. 3-amino-2-oxopropyl phosphate is bound by residues Asp191 and 213–214 (GH).

This sequence belongs to the PNP synthase family. Homooctamer; tetramer of dimers.

It localises to the cytoplasm. The enzyme catalyses 3-amino-2-oxopropyl phosphate + 1-deoxy-D-xylulose 5-phosphate = pyridoxine 5'-phosphate + phosphate + 2 H2O + H(+). It participates in cofactor biosynthesis; pyridoxine 5'-phosphate biosynthesis; pyridoxine 5'-phosphate from D-erythrose 4-phosphate: step 5/5. Its function is as follows. Catalyzes the complicated ring closure reaction between the two acyclic compounds 1-deoxy-D-xylulose-5-phosphate (DXP) and 3-amino-2-oxopropyl phosphate (1-amino-acetone-3-phosphate or AAP) to form pyridoxine 5'-phosphate (PNP) and inorganic phosphate. The chain is Pyridoxine 5'-phosphate synthase from Flavobacterium johnsoniae (strain ATCC 17061 / DSM 2064 / JCM 8514 / BCRC 14874 / CCUG 350202 / NBRC 14942 / NCIMB 11054 / UW101) (Cytophaga johnsonae).